The chain runs to 315 residues: Acetyl-coenzyme A carboxylase carboxyl transferase subunit alpha (315 aa).

Residues 40–293 (LQDKSKTLTE…REELSSQLAM (254 aa)) enclose the CoA carboxyltransferase C-terminal domain.

The protein belongs to the AccA family. Acetyl-CoA carboxylase is a heterohexamer composed of biotin carboxyl carrier protein (AccB), biotin carboxylase (AccC) and two subunits each of ACCase subunit alpha (AccA) and ACCase subunit beta (AccD).

The protein resides in the cytoplasm. It catalyses the reaction N(6)-carboxybiotinyl-L-lysyl-[protein] + acetyl-CoA = N(6)-biotinyl-L-lysyl-[protein] + malonyl-CoA. It participates in lipid metabolism; malonyl-CoA biosynthesis; malonyl-CoA from acetyl-CoA: step 1/1. Its function is as follows. Component of the acetyl coenzyme A carboxylase (ACC) complex. First, biotin carboxylase catalyzes the carboxylation of biotin on its carrier protein (BCCP) and then the CO(2) group is transferred by the carboxyltransferase to acetyl-CoA to form malonyl-CoA. This Pseudomonas syringae pv. tomato (strain ATCC BAA-871 / DC3000) protein is Acetyl-coenzyme A carboxylase carboxyl transferase subunit alpha.